Consider the following 189-residue polypeptide: Gluconokinase (189 aa).

ATP is bound at residue 16–23; it reads GVSGAGKS.

The protein belongs to the gluconokinase GntK/GntV family. Monomer.

It carries out the reaction D-gluconate + ATP = 6-phospho-D-gluconate + ADP + H(+). It functions in the pathway carbohydrate acid metabolism; D-gluconate degradation. Phosphorylates gluconate to 6-phosphogluconate. The protein is Gluconokinase of Arabidopsis thaliana (Mouse-ear cress).